A 257-amino-acid chain; its full sequence is Paired box protein 1 homolog (257 aa).

The segment covering 26 to 37 (TTPSSTSTTPSS) has biased composition (low complexity). Residues 26–58 (TTPSSTSTTPSSDNGIQQYSSISTSSGYAPANS) are disordered. A compositionally biased stretch (polar residues) spans 38–52 (DNGIQQYSSISTSSG). The segment at residues 61-187 (KTAEVNQLGG…SSISRILRNK (127 aa)) is a DNA-binding region (paired). Residues 64–120 (EVNQLGGVFVNGRPLPFEMRCKIVELSRQGTRPCDISRQLKISHGCVSKILTRFSEN) form a PAI subdomain region. The segment at 139–187 (KVVEYIRSLKRSDPGIFAWEIRDRLISADICDRANLPSVSSISRILRNK) is RED subdomain.

It is found in the nucleus. In terms of biological role, transcription factor. May play a role in pharyngeal cell differentiation. May have a protective role in response to infection by the Gram-negative bacterium Vibrio cholerae. This chain is Paired box protein 1 homolog, found in Caenorhabditis elegans.